The following is a 472-amino-acid chain: Nuclear hormone receptor family member nhr-2 (472 aa).

Composition is skewed to polar residues over residues 57-83 (TATN…LSQI), 90-112 (NDTI…HNQP), 138-147 (LSSTQSSPDN), and 159-171 (VRRN…SAST). Disordered regions lie at residues 57–112 (TATN…HNQP) and 138–184 (LSST…RTNT). Positions 215-297 (KDRCMVCGDN…VGMNRDNVRV (83 aa)) form a DNA-binding region, nuclear receptor. NR C4-type zinc fingers lie at residues 218-238 (CMVC…CEGC) and 267-285 (CAAN…FAKC).

The protein belongs to the nuclear hormone receptor family.

The protein localises to the nucleus. In terms of biological role, orphan nuclear receptor. This chain is Nuclear hormone receptor family member nhr-2 (nhr-2), found in Caenorhabditis elegans.